The chain runs to 76 residues: MIRRALVLLVRIYQRLVSPLLPPACRFYPSCSAYAVTALQRHGALRGSWLTVRRLCRCHPFHPGGVDPVPELTPKR.

The protein belongs to the UPF0161 family.

The protein localises to the cell inner membrane. In terms of biological role, could be involved in insertion of integral membrane proteins into the membrane. This is Putative membrane protein insertion efficiency factor from Anaeromyxobacter dehalogenans (strain 2CP-C).